We begin with the raw amino-acid sequence, 536 residues long: MLSRIEQELAQLGITNVKEIVRNPSYEQLFEEEMKPELEGFEKGRLTTSGAVAVDTGIFTGRSPKDKYIVYDETSKDNVWWTSDAVKNDNKPMNQATWQSLKELVTHQLSNKRLFVVDAFCGANKDSRVAVRIVTEVAWQAHFVKNMFVRPSEEELLNFVPDFVVMNGSKVTNPNWKEQGLNSENFVAFNLTEKIQLIGGTWYGGEMKKGLFSLMNYWLPLKGIASMHCSANVGAEGDVAVFFGLSGTGKTTLSTDPKRKLIGDDEHGWDDDGVFNYEGGCYAKTINLSEENEPDIYRAIRRDALLENVVVREDGSVDFADGSKTENTRVSYPIHHIDNIVEPVSKAGHAKKVIFLTADAFGVLPPVSKLTPEQTKYYFLSGFTAKLAGTERGITEPTPTFSACFGAAFLSLHPTKYAEVLVKRMEEAGSQAYLVNTGWNGSGKRISIKDTRGIIDAILDGSIEKAETKELPIFNLAIPTALPNVDPAILDPRDTYADKAQWQTKAEDLAGRFVKNFEKYTTNDEGKALVAAGPKL.

3 residues coordinate substrate: Arg62, Tyr203, and Lys209. ATP-binding positions include Lys209, His228, and 244-252; that span reads GLSGTGKTT. Positions 209 and 228 each coordinate Mn(2+). Residue Asp265 coordinates Mn(2+). ATP is bound by residues Glu293, Arg329, 445-446, and Thr451; that span reads RI. Arg329 contributes to the substrate binding site.

Belongs to the phosphoenolpyruvate carboxykinase (ATP) family. As to quaternary structure, monomer. Mn(2+) serves as cofactor.

It localises to the cytoplasm. The catalysed reaction is oxaloacetate + ATP = phosphoenolpyruvate + ADP + CO2. It participates in carbohydrate biosynthesis; gluconeogenesis. Its function is as follows. Involved in the gluconeogenesis. Catalyzes the conversion of oxaloacetate (OAA) to phosphoenolpyruvate (PEP) through direct phosphoryl transfer between the nucleoside triphosphate and OAA. The protein is Phosphoenolpyruvate carboxykinase (ATP) of Actinobacillus pleuropneumoniae serotype 5b (strain L20).